The following is a 346-amino-acid chain: Peroxidase 9 (346 aa).

A signal peptide spans 1–23; sequence MAISKLIPTLVLFVLFSFDVSVA. Intrachain disulfides connect cysteine 54/cysteine 134, cysteine 87/cysteine 92, cysteine 140/cysteine 342, and cysteine 219/cysteine 251. Residue histidine 85 is the Proton acceptor of the active site. Ca(2+)-binding residues include aspartate 86, valine 89, glycine 91, aspartate 93, and serine 95. Proline 182 is a substrate binding site. Residue asparagine 185 is glycosylated (N-linked (GlcNAc...) asparagine). Histidine 212 is a heme b binding site. Threonine 213 lines the Ca(2+) pocket. Aspartate 264, serine 267, and aspartate 272 together coordinate Ca(2+).

The protein belongs to the peroxidase family. Classical plant (class III) peroxidase subfamily. Requires heme b as cofactor. The cofactor is Ca(2+).

It localises to the secreted. The enzyme catalyses 2 a phenolic donor + H2O2 = 2 a phenolic radical donor + 2 H2O. In terms of biological role, removal of H(2)O(2), oxidation of toxic reductants, biosynthesis and degradation of lignin, suberization, auxin catabolism, response to environmental stresses such as wounding, pathogen attack and oxidative stress. These functions might be dependent on each isozyme/isoform in each plant tissue. The chain is Peroxidase 9 (PER9) from Arabidopsis thaliana (Mouse-ear cress).